Consider the following 332-residue polypeptide: Nucleotide-binding protein RC1_2868 (332 aa).

A disordered region spans residues 1 to 27; that stretch reads MTGQPLTMETAAGADAGTGAATHPADG. Over residues 10–22 the composition is skewed to low complexity; that stretch reads TAAGADAGTGAAT. An ATP-binding site is contributed by 36 to 43; that stretch reads GMSGGGLS. Residue 82–85 coordinates GTP; it reads DSRT. Basic and acidic residues-rich tracts occupy residues 302–312 and 322–332; these read GHRDLDRRHPA and VASRETPEEHR. The tract at residues 302 to 332 is disordered; the sequence is GHRDLDRRHPAPEPAPPWREVASRETPEEHR.

The protein belongs to the RapZ-like family.

Displays ATPase and GTPase activities. The polypeptide is Nucleotide-binding protein RC1_2868 (Rhodospirillum centenum (strain ATCC 51521 / SW)).